We begin with the raw amino-acid sequence, 94 residues long: Putative pterin-4-alpha-carbinolamine dehydratase (94 aa).

This sequence belongs to the pterin-4-alpha-carbinolamine dehydratase family.

The enzyme catalyses (4aS,6R)-4a-hydroxy-L-erythro-5,6,7,8-tetrahydrobiopterin = (6R)-L-erythro-6,7-dihydrobiopterin + H2O. The protein is Putative pterin-4-alpha-carbinolamine dehydratase of Mycobacterium sp. (strain JLS).